Consider the following 354-residue polypeptide: Thiamine thiazole synthase 1, chloroplastic (354 aa).

The transit peptide at 1–45 directs the protein to the chloroplast; sequence MATAAASSLLKSSFAGSRLPAATRTTPASLVVATGPRGAGAGPIC. Substrate contacts are provided by residues Ala-100, 120-121, Gly-128, and Val-193; that span reads EQ. Position 222 is a 2,3-didehydroalanine (Cys) (Cys-222). Substrate contacts are provided by residues Asp-224, His-239, Met-291, and 301–303; that span reads RMG.

This sequence belongs to the THI4 family. Homooctamer. Fe cation is required as a cofactor. Post-translationally, during the catalytic reaction, a sulfide is transferred from Cys-222 to a reaction intermediate, generating a dehydroalanine residue. In terms of tissue distribution, highest expression in developing embryos and green leaves and a very low level expression seen in endosperm, roots, etiolated shoots and immature ears.

It localises to the plastid. The protein localises to the chloroplast. The enzyme catalyses [ADP-thiazole synthase]-L-cysteine + glycine + NAD(+) = [ADP-thiazole synthase]-dehydroalanine + ADP-5-ethyl-4-methylthiazole-2-carboxylate + nicotinamide + 3 H2O + 2 H(+). In terms of biological role, involved in biosynthesis of the thiamine precursor thiazole. Catalyzes the conversion of NAD and glycine to adenosine diphosphate 5-(2-hydroxyethyl)-4-methylthiazole-2-carboxylic acid (ADT), an adenylated thiazole intermediate. The reaction includes an iron-dependent sulfide transfer from a conserved cysteine residue of the protein to a thiazole intermediate. The enzyme can only undergo a single turnover, which suggests it is a suicide enzyme. May have additional roles in adaptation to various stress conditions and in DNA damage tolerance. This chain is Thiamine thiazole synthase 1, chloroplastic, found in Zea mays (Maize).